A 284-amino-acid chain; its full sequence is Trimeric intracellular cation channel type B-A (284 aa).

Residues 1 to 15 (MESLSELSVQFSQLS) are Lumenal-facing. A helical transmembrane segment spans residues 16–33 (MFPFFDMAHYVVSVMSAR). At 34–46 (EQAGALDIAARSP) the chain is on the cytoplasmic side. Residues 47–68 (MASWFSAMLYCFGGGILSSILL) form a helical membrane-spanning segment. Residues 69 to 79 (AEPPIAVLSNT) lie on the Lumenal side of the membrane. A helical membrane pass occupies residues 80-99 (TNIMLASTIWYMVYYFPYDL). Topologically, residues 100-102 (FYN) are cytoplasmic. The chain crosses the membrane as a helical span at residues 103 to 121 (CFFFLPIRLIIAGMKEVTR). A 1,2-diacyl-sn-glycero-3-phospho-(1D-myo-inositol-4,5-bisphosphate) contacts are provided by K117 and R121. Residues 122-137 (TWKILSGVTHAHSHYK) lie on the Lumenal side of the membrane. Residues 138–155 (DALLVMITIGWARGAGGG) form a helical membrane-spanning segment. Topologically, residues 156–177 (LISNFEQLVRGVWKPESNEFLK) are cytoplasmic. Residues 178–195 (MSYPVKVTLIGAVLFTLQ) form a helical membrane-spanning segment. The Lumenal segment spans residues 196 to 206 (HGHYLPISRHN). Residues 207 to 224 (LMLIYTMFLVLIKVTMML) traverse the membrane as a helical segment. At 225 to 284 (THSTASPFLPLETPLQRILFGQRQKPSEVRQSASSSGAKGKPSKKTLDKDSGEQSKKKDS) the chain is on the cytoplasmic side. The interval 246-284 (QRQKPSEVRQSASSSGAKGKPSKKTLDKDSGEQSKKKDS) is disordered. Basic and acidic residues predominate over residues 269–284 (KTLDKDSGEQSKKKDS).

This sequence belongs to the TMEM38 family. As to quaternary structure, homotrimer; conformation seems to be controled by binding to diacylglycerol (DAG).

The protein resides in the endoplasmic reticulum membrane. It catalyses the reaction K(+)(in) = K(+)(out). With respect to regulation, channel activity is activated by increased cytosolic Ca(2+) levels and blocked by luminal high Ca(2+) levels. Functionally, intracellular monovalent cation channel required for maintenance of rapid intracellular calcium release. Acts as a potassium counter-ion channel that functions in synchronization with calcium release from intracellular stores. Activated by increased cytosolic Ca(2+) levels. The chain is Trimeric intracellular cation channel type B-A (tmem38b-a) from Xenopus laevis (African clawed frog).